The chain runs to 468 residues: Protein phosphatase ppm-1.A (468 aa).

Residues 1–23 (MTISRADLQIASSAEPKTHGNLN) form a disordered region. The PPM-type phosphatase domain occupies 106–381 (RYGMSSMQGW…DNMTMVVVCF (276 aa)). Mn(2+) is bound by residues Asp-145, Gly-146, Asp-329, and Asp-372.

Belongs to the PP2C family. Requires Mg(2+) as cofactor. Mn(2+) serves as cofactor. In terms of tissue distribution, expressed in neurons of the nerve ring and motor neurons of the ventral nerve cord.

It localises to the synapse. The catalysed reaction is O-phospho-L-seryl-[protein] + H2O = L-seryl-[protein] + phosphate. It catalyses the reaction O-phospho-L-threonyl-[protein] + H2O = L-threonyl-[protein] + phosphate. Probable phosphatase which regulates axon termination in ALM and PLM neurons, and synaptic branch extension and/or stabilization in PLM neurons. Plays a role in synapse formation in GABAergic DD motor neurons probably by dephosphorylating pmk-3 thereby negatively regulating a MAP kinase pathway that includes dlk-1, mkk-4 and pmk-3. This chain is Protein phosphatase ppm-1.A, found in Caenorhabditis elegans.